The following is a 66-amino-acid chain: Defensin-B1 (66 aa).

The first 23 residues, 1–23, serve as a signal peptide directing secretion; it reads MNAHVLLLCTILFLLVHTPPVLG. 3 disulfide bridges follow: Cys-29-Cys-56, Cys-36-Cys-50, and Cys-40-Cys-57. Residues 61 to 66 constitute a propeptide that is removed on maturation; it reads VLMEDG.

It belongs to the beta-defensin family. As to expression, expressed at low levels in kidney, lung, and spleen.

Its subcellular location is the secreted. In terms of biological role, has bactericidal activity. May act as a ligand for C-C chemokine receptor CCR6. Positively regulates the sperm motility and bactericidal activity in a CCR6-dependent manner. Binds to CCR6 and triggers Ca2+ mobilization in the sperm which is important for its motility. The sequence is that of Defensin-B1 from Ornithorhynchus anatinus (Duckbill platypus).